Reading from the N-terminus, the 456-residue chain is uncharacterized protein (456 aa).

One can recognise a TRAM domain in the interval 5–63 (LVKKGQQISLKIKRLGINGEGIGYYKKLIIFVPGALPKEEVTATITNVTPKFAEGTLQS). The [4Fe-4S] cluster site is built by C76, C82, C85, and C165. The S-adenosyl-L-methionine site is built by Q289, Y318, D339, and D387. C414 (nucleophile) is an active-site residue.

Belongs to the class I-like SAM-binding methyltransferase superfamily. RNA M5U methyltransferase family.

This is an uncharacterized protein from Enterococcus faecalis (strain ATCC 700802 / V583).